We begin with the raw amino-acid sequence, 140 residues long: Nucleoside diphosphate kinase (140 aa).

Residues K11, F59, R87, T93, R104, and N114 each coordinate ATP. The active-site Pros-phosphohistidine intermediate is the H117.

Belongs to the NDK family. In terms of assembly, homotetramer. Mg(2+) is required as a cofactor.

Its subcellular location is the cytoplasm. The enzyme catalyses a 2'-deoxyribonucleoside 5'-diphosphate + ATP = a 2'-deoxyribonucleoside 5'-triphosphate + ADP. It catalyses the reaction a ribonucleoside 5'-diphosphate + ATP = a ribonucleoside 5'-triphosphate + ADP. Its function is as follows. Major role in the synthesis of nucleoside triphosphates other than ATP. The ATP gamma phosphate is transferred to the NDP beta phosphate via a ping-pong mechanism, using a phosphorylated active-site intermediate. The polypeptide is Nucleoside diphosphate kinase (Rhizobium etli (strain ATCC 51251 / DSM 11541 / JCM 21823 / NBRC 15573 / CFN 42)).